The chain runs to 37 residues: Cytochrome b6-f complex subunit 5 (37 aa).

Residues Phe-5 to Ala-25 form a helical membrane-spanning segment.

The protein belongs to the PetG family. The 4 large subunits of the cytochrome b6-f complex are cytochrome b6, subunit IV (17 kDa polypeptide, PetD), cytochrome f and the Rieske protein, while the 4 small subunits are PetG, PetL, PetM and PetN. The complex functions as a dimer.

It localises to the plastid membrane. Component of the cytochrome b6-f complex, which mediates electron transfer between photosystem II (PSII) and photosystem I (PSI), cyclic electron flow around PSI, and state transitions. PetG is required for either the stability or assembly of the cytochrome b6-f complex. The chain is Cytochrome b6-f complex subunit 5 from Cuscuta obtusiflora (Peruvian dodder).